Reading from the N-terminus, the 141-residue chain is Ribonuclease VapC38 (141 aa).

2 residues coordinate Mg(2+): Asp-5 and Asp-102.

Belongs to the PINc/VapC protein family. It depends on Mg(2+) as a cofactor.

It localises to the secreted. Functionally, toxic component of a type II toxin-antitoxin (TA) system. An RNase. Its cognate antitoxin is VapB38. The chain is Ribonuclease VapC38 from Mycobacterium tuberculosis (strain ATCC 25618 / H37Rv).